We begin with the raw amino-acid sequence, 555 residues long: Glypican-6 (555 aa).

The N-terminal stretch at 1 to 23 (MPSWIGAVILPLLGLLLSLPAGA) is a signal peptide. A compositionally biased stretch (low complexity) spans 348-357 (PALRSARSAP). 2 disordered regions span residues 348–376 (PALR…PTTA) and 480–501 (GNDV…GSGC). S529 carries GPI-anchor amidated serine lipidation. The propeptide at 530–555 (SAAQRGHSLLSWSLTCIVLALQRLCR) is removed in mature form.

It belongs to the glypican family. In terms of tissue distribution, widely expressed. High expression in fetal kidney and lung and lower expressions in fetal liver and brain. In adult tissues, very abundant in ovary, high levels also observed in liver, kidney, small intestine and colon. Not detected in peripheral blood leukocytes. Detected in breast cancer cells (at protein level).

The protein localises to the cell membrane. Its subcellular location is the secreted. The protein resides in the extracellular space. Cell surface proteoglycan that bears heparan sulfate. Putative cell surface coreceptor for growth factors, extracellular matrix proteins, proteases and anti-proteases. Enhances migration and invasion of cancer cells through WNT5A signaling. In Homo sapiens (Human), this protein is Glypican-6 (GPC6).